The sequence spans 253 residues: 2,3-bisphosphoglycerate-dependent phosphoglycerate mutase (253 aa).

Substrate-binding positions include 12 to 19 (RHGESEWN), 25 to 26 (TG), arginine 64, 91 to 94 (ERHY), lysine 102, and 118 to 119 (RR). Residue histidine 13 is the Tele-phosphohistidine intermediate of the active site. Glutamate 91 acts as the Proton donor/acceptor in catalysis. The interval 126-148 (PPLADGSEFSQSDDPRYASIPPE) is disordered. 187–188 (GN) is a binding site for substrate.

The protein belongs to the phosphoglycerate mutase family. BPG-dependent PGAM subfamily.

It catalyses the reaction (2R)-2-phosphoglycerate = (2R)-3-phosphoglycerate. It participates in carbohydrate degradation; glycolysis; pyruvate from D-glyceraldehyde 3-phosphate: step 3/5. Functionally, catalyzes the interconversion of 2-phosphoglycerate and 3-phosphoglycerate. In Streptomyces avermitilis (strain ATCC 31267 / DSM 46492 / JCM 5070 / NBRC 14893 / NCIMB 12804 / NRRL 8165 / MA-4680), this protein is 2,3-bisphosphoglycerate-dependent phosphoglycerate mutase.